The sequence spans 210 residues: Uracil phosphoribosyltransferase (210 aa).

5-phospho-alpha-D-ribose 1-diphosphate-binding positions include arginine 78, arginine 103, and 130 to 138 (DPMLATGGT). Residues isoleucine 193 and 198-200 (GDA) contribute to the uracil site. Residue aspartate 199 participates in 5-phospho-alpha-D-ribose 1-diphosphate binding.

The protein belongs to the UPRTase family. Mg(2+) is required as a cofactor.

It carries out the reaction UMP + diphosphate = 5-phospho-alpha-D-ribose 1-diphosphate + uracil. It participates in pyrimidine metabolism; UMP biosynthesis via salvage pathway; UMP from uracil: step 1/1. Its activity is regulated as follows. Allosterically activated by GTP. In terms of biological role, catalyzes the conversion of uracil and 5-phospho-alpha-D-ribose 1-diphosphate (PRPP) to UMP and diphosphate. The sequence is that of Uracil phosphoribosyltransferase from Xanthomonas euvesicatoria pv. vesicatoria (strain 85-10) (Xanthomonas campestris pv. vesicatoria).